The following is a 401-amino-acid chain: Imidazolonepropionase (401 aa).

Fe(3+) is bound by residues histidine 70 and histidine 72. Residues histidine 70 and histidine 72 each coordinate Zn(2+). 3 residues coordinate 4-imidazolone-5-propanoate: arginine 79, tyrosine 142, and histidine 175. Tyrosine 142 provides a ligand contact to N-formimidoyl-L-glutamate. Histidine 240 contributes to the Fe(3+) binding site. Position 240 (histidine 240) interacts with Zn(2+). Glutamine 243 contacts 4-imidazolone-5-propanoate. Aspartate 315 is a Fe(3+) binding site. Residue aspartate 315 coordinates Zn(2+). Positions 317 and 319 each coordinate N-formimidoyl-L-glutamate. Threonine 320 lines the 4-imidazolone-5-propanoate pocket.

The protein belongs to the metallo-dependent hydrolases superfamily. HutI family. Zn(2+) is required as a cofactor. The cofactor is Fe(3+).

The protein resides in the cytoplasm. The catalysed reaction is 4-imidazolone-5-propanoate + H2O = N-formimidoyl-L-glutamate. It functions in the pathway amino-acid degradation; L-histidine degradation into L-glutamate; N-formimidoyl-L-glutamate from L-histidine: step 3/3. Functionally, catalyzes the hydrolytic cleavage of the carbon-nitrogen bond in imidazolone-5-propanoate to yield N-formimidoyl-L-glutamate. It is the third step in the universal histidine degradation pathway. The polypeptide is Imidazolonepropionase (Caulobacter sp. (strain K31)).